We begin with the raw amino-acid sequence, 524 residues long: Zinc finger CCCH domain-containing protein 37 (524 aa).

The disordered stretch occupies residues 19 to 39; the sequence is ASTVSPAPPPPQQPLPPKTGL. A compositionally biased stretch (pro residues) spans 24-35; sequence PAPPPPQQPLPP. C3H1-type zinc fingers lie at residues 174 to 202, 225 to 253, and 268 to 296; these read RAGEKDCTHYMQTRTCKFGESCRFDHPIW, RPGEPDCPYYIKTQRCKYGSKCKFNHPRE, and RPSEPMCTFYMKTGKCKFGLSCKFHHPKD. The segment at 300–319 is disordered; it reads PSSSQDIGSSVGLTSEPDAT. 3 C3H1-type zinc fingers span residues 340 to 368, 420 to 448, and 473 to 501; these read RSGEVDCPFYLKTGSCKYGATCRYNHPER, RPGQSECDYYMKTGECKFGERCKFHHPAD, and REGALNCPYYMKTGTCKYGATCKFDHPPP. A disordered region spans residues 505–524; it reads MAKTTSEADAAGATNTDTTQ. Over residues 512-524 the composition is skewed to low complexity; sequence ADAAGATNTDTTQ.

Interacts with HEN4. Interacts with FLK and PEP. In terms of tissue distribution, highly expressed in inflorescences, at intermediate levels in leaves and stems and at lower levels in roots.

The protein resides in the nucleus speckle. Its function is as follows. Involved in flower development. Functions in floral reproductive organ identity by binding AGAMOUS (AG) pre-mRNA and promoting its processing. Functions in association with HUA2 and HEN4. This is Zinc finger CCCH domain-containing protein 37 (HUA1) from Arabidopsis thaliana (Mouse-ear cress).